The chain runs to 1290 residues: 1-phosphatidylinositol 4,5-bisphosphate phosphodiesterase gamma-1 (1290 aa).

N-acetylalanine is present on A2. One can recognise a PH 1 domain in the interval R27–E142. Residues Q152–R187 form the EF-hand domain. Ca(2+) is bound by residues D165, N167, E169, R171, and D176. Residues E320–K464 enclose the PI-PLC X-box domain. Residues H335 and H380 contribute to the active site. The PH 2; first part domain maps to S489–T523. Y506 is subject to Phosphotyrosine. The segment at E522 to S546 is disordered. 2 SH2 domains span residues W550–V657 and W668–I756. Position 771 is a phosphotyrosine; by SYK (Y771). Y775 carries the post-translational modification Phosphotyrosine. Y783 carries the phosphotyrosine; by ITK, SYK and TXK modification. The region spanning T791–N851 is the SH3 domain. A PH 2; second part domain is found at F895–Q931. The PI-PLC Y-box domain maps to L953 to R1070. Y977 is subject to Phosphotyrosine. The region spanning D1071–N1194 is the C2 domain. Residues S1221, S1227, S1233, and S1248 each carry the phosphoserine modification. Residue Y1253 is modified to Phosphotyrosine. S1263 carries the phosphoserine modification. A disordered region spans residues F1271 to L1290.

As to quaternary structure, interacts with AGAP2 via its SH3 domain. Interacts (via SH2 domain) with RET. Interacts with FLT1 (tyrosine-phosphorylated). Interacts (via SH2 domain) with FGFR1, FGFR2, FGFR3 and FGFR4 (phosphorylated). Interacts with LAT (phosphorylated) upon TCR activation. Interacts (via SH3 domain) with the Pro-rich domain of TNK1. Associates with BLNK, VAV1, GRB2 and NCK1 in a B-cell antigen receptor-dependent fashion. Interacts with CBLB in activated T-cells; which inhibits phosphorylation. Interacts with SHB. Interacts (via SH3 domain) with the Arg/Gly-rich-flanked Pro-rich domains of KHDRBS1/SAM68. This interaction is selectively regulated by arginine methylation of KHDRBS1/SAM68. Interacts with INPP5D/SHIP1, THEMIS and CLNK. Interacts with AXL, FLT4 and KIT. Interacts with RALGPS1. Interacts (via the SH2 domains) with VIL1 (phosphorylated at C-terminus tyrosine phosphorylation sites). Interacts (via SH2 domain) with PDGFRA and PDGFRB (tyrosine phosphorylated). Interacts with PIP5K1C. Interacts with NTRK1 and NTRK2 (phosphorylated upon ligand-binding). Interacts with SYK; activates PLCG1. Interacts with GRB2, LAT and THEMIS upon TCR activation in thymocytes. Interacts with TESPA1; the association is increased with prolonged stimulation of the TCR and may facilitate the assembly of the LAT signalosome. Interacts (via C-terminal proline-rich domain (PRD)) with PLCG1 (via SH3 domain); this interaction leads to guanine nucleotide exchange from PlCG1 to DNM1 and enhances DNM1-dependent endocytosis. Requires Ca(2+) as cofactor. In terms of processing, ubiquitinated by CBLB in activated T-cells. Tyrosine phosphorylated in response to signaling via activated FLT3, KIT and PDGFRA. Tyrosine phosphorylated by activated FGFR1, FGFR2, FGFR3 and FGFR4. Tyrosine phosphorylated by activated FLT1 and KDR. Tyrosine phosphorylated by activated PDGFRB. The receptor-mediated activation of PLCG1 involves its phosphorylation by tyrosine kinases, in response to ligation of a variety of growth factor receptors and immune system receptors. For instance, SYK phosphorylates and activates PLCG1 in response to ligation of the B-cell receptor. May be dephosphorylated by PTPRJ. Phosphorylated by ITK and TXK on Tyr-783 upon TCR activation in T-cells.

It localises to the cell projection. It is found in the lamellipodium. Its subcellular location is the ruffle. The catalysed reaction is a 1,2-diacyl-sn-glycero-3-phospho-(1D-myo-inositol-4,5-bisphosphate) + H2O = 1D-myo-inositol 1,4,5-trisphosphate + a 1,2-diacyl-sn-glycerol + H(+). It carries out the reaction a 1,2-diacyl-sn-glycero-3-phospho-(1D-myo-inositol) + H2O = 1D-myo-inositol 1-phosphate + a 1,2-diacyl-sn-glycerol + H(+). With respect to regulation, activated by phosphorylation on tyrosine residues. Its function is as follows. Mediates the production of the second messenger molecules diacylglycerol (DAG) and inositol 1,4,5-trisphosphate (IP3). Plays an important role in the regulation of intracellular signaling cascades. Becomes activated in response to ligand-mediated activation of receptor-type tyrosine kinases, such as PDGFRA, PDGFRB, EGFR, FGFR1, FGFR2, FGFR3 and FGFR4. Plays a role in actin reorganization and cell migration. Guanine nucleotide exchange factor that binds the GTPase DNM1 and catalyzes the dissociation of GDP, allowing a GTP molecule to bind in its place, therefore enhancing DNM1-dependent endocytosis. The protein is 1-phosphatidylinositol 4,5-bisphosphate phosphodiesterase gamma-1 of Rattus norvegicus (Rat).